The primary structure comprises 668 residues: WD repeat-containing protein 48 homolog (668 aa).

WD repeat units follow at residues 26 to 65 (QHRN…SEKY), 71 to 110 (HHND…CMST), 113 to 152 (THRD…ALTA), 164 to 203 (GSKD…RRMK), 206 to 245 (GHTE…CVQT), 248 to 287 (VHKE…NKTL), 290 to 329 (EEQA…RCTL), and 350 to 389 (KGGA…KKEQ). The tract at residues 592–616 (ETTPSGGNANNSLQNSQSDANSEGS) is disordered.

Belongs to the WD repeat WDR48 family. In terms of assembly, catalytic component of the Usp12-46 deubiquitylase complex consisting of Usp12-46, Wdr20 and Uaf1; regulatory subunit that, together wtih Wdr20, stabilizes Usp12-46. The Usp12-46 deubiquitylase complex associates with arr/arrow; the interaction leads to deubiquitination and stabilization of arr/arrow.

Regulatory component of the Usp12-46 deubiquitylase complex. activates deubiquitination by increasing the catalytic turnover without increasing the affinity of deubiquitinating enzymes for the substrate. The complex deubiquitylates the wg/wingless-signaling receptor arr/arrow, which stabilizes the receptor and increases its concentration at the cell surface; this enhances the sensitivity of cells to wg/wingless-signal stimulation. This increases the amplitude and spatial range of the signaling response to the wg/wingless morphogen gradient, facilitating the precise concentration-dependent regulation of its target genes. Together with Wdr20 and Usp12-46 required for wg/wingless-mediated signaling in the wing imaginal disc and for wg/wingless-dependent regulation of intestinal stem cell proliferation. The protein is WD repeat-containing protein 48 homolog of Drosophila melanogaster (Fruit fly).